A 185-amino-acid polypeptide reads, in one-letter code: Pericyclase pydY (185 aa).

The protein belongs to the pericyclase pydY family.

Its pathway is mycotoxin biosynthesis. In terms of biological role, pericyclase; part of the gene cluster that mediates the biosynthesis of pyrrocidines, fungal natural products containing a macrocyclic para-cyclophane connected to a decahydrofluorene ring system that show potent antibiotic activities toward Gram-negative bacteria. Within the pathway, pydY is involved in the late Diels-Alder cycloaddition step that leads to the formation of the decahydrofluorene core. The pathway begins with the PKS-NRPS pydA which, with the help of the trans-enoyl reductase pydC, synthesizes the polyketide-tyrosyl acyl thioester product which can be reductively off-loaded by the terminal reductase (R) domain in pydA. The alpha/beta hydrolase pydG is then required to catalyze the subsequent Knoevenagel condensation that affords the 3-pyrrolin-2-one ring, whereas the four proteins pydB, pydE, pydX and pydZ then function synergistically to form the cyclophane. PydB and the membrane-bound pydX and pydZ are lipid-binding proteins that can sequester and mold the pdyG product into the inverse S-shape. Binding of the medium chain reductase pydE to the complex would trigger the cascade oxidative cyclization. PydY is involved in the Diels-Alder cycloaddition that forms the decahydrofluorene core. Additional non-enzymatic hydroxylation yields pyrrocidine A2 which can be further reduced into pyrrocidine B by an endogenous reductase. The chain is Pericyclase pydY from Acremonium sp.